Consider the following 104-residue polypeptide: AVIToxin-VAR1 (104 aa).

An N-terminal signal peptide occupies residues 1 to 19 (MRSLLCAPLLLLLLSAGES). Intrachain disulfides connect Cys26/Cys38, Cys32/Cys50, Cys37/Cys78, Cys60/Cys86, and Cys80/Cys96.

This sequence belongs to the AVIT (prokineticin) family. In terms of tissue distribution, expressed by the venom gland.

The protein localises to the secreted. Potent agonist for both PKR1/PROKR1 and PKR2/PROKR2. Potently contracts gastrointestinal (GI) smooth muscle. This chain is AVIToxin-VAR1, found in Varanus varius (Lace monitor lizard).